Consider the following 270-residue polypeptide: FKBP-type peptidyl-prolyl cis-trans isomerase FkpA (270 aa).

The N-terminal stretch at 1–25 (MKSLFKVTLLATTMAVALHAPITFA) is a signal peptide. Positions 164 to 249 (SDTVVVNYKG…VFDVELLDVK (86 aa)) constitute a PPIase FKBP-type domain.

Belongs to the FKBP-type PPIase family.

It is found in the periplasm. The enzyme catalyses [protein]-peptidylproline (omega=180) = [protein]-peptidylproline (omega=0). PPIases accelerate the folding of proteins. It catalyzes the cis-trans isomerization of proline imidic peptide bonds in oligopeptides. This is FKBP-type peptidyl-prolyl cis-trans isomerase FkpA (fkpA) from Escherichia coli O157:H7.